A 365-amino-acid chain; its full sequence is Chorismate synthase (365 aa).

Residue Arg-46 coordinates NADP(+). FMN-binding positions include 123-125, 241-242, Gly-281, 296-300, and Arg-322; these read RSS, NG, and KPTPS.

Belongs to the chorismate synthase family. Homotetramer. FMNH2 is required as a cofactor.

The catalysed reaction is 5-O-(1-carboxyvinyl)-3-phosphoshikimate = chorismate + phosphate. Its pathway is metabolic intermediate biosynthesis; chorismate biosynthesis; chorismate from D-erythrose 4-phosphate and phosphoenolpyruvate: step 7/7. Catalyzes the anti-1,4-elimination of the C-3 phosphate and the C-6 proR hydrogen from 5-enolpyruvylshikimate-3-phosphate (EPSP) to yield chorismate, which is the branch point compound that serves as the starting substrate for the three terminal pathways of aromatic amino acid biosynthesis. This reaction introduces a second double bond into the aromatic ring system. In Helicobacter pylori (strain ATCC 700392 / 26695) (Campylobacter pylori), this protein is Chorismate synthase.